Consider the following 440-residue polypeptide: Xylose isomerase (440 aa).

Residues His101 and Asp104 contribute to the active site. Mg(2+)-binding residues include Glu232, Glu268, His271, Asp296, Asp307, Asp309, and Asp339.

Belongs to the xylose isomerase family. In terms of assembly, homotetramer. Mg(2+) is required as a cofactor.

The protein localises to the cytoplasm. It carries out the reaction alpha-D-xylose = alpha-D-xylulofuranose. The chain is Xylose isomerase from Salmonella agona (strain SL483).